The chain runs to 200 residues: Systemin (200 aa).

The tract at residues 1 to 33 (MGTPSYDIKNKGDDMQEEPKVKLHHEKGGDEKE) is disordered. 2 consecutive propeptides follow at residues 1–178 (MGTP…REDL) and 197–200 (NNKL). A 1; truncated repeat occupies 3-8 (TPSYDI). Basic and acidic residues predominate over residues 8–33 (IKNKGDDMQEEPKVKLHHEKGGDEKE). Repeat copies occupy residues 37 to 45 (EKETPSQDI), 80 to 88 (EKETISQYI), 117 to 125 (EKETPSQDI), and 145 to 153 (DKETPSQDI). Disordered stretches follow at residues 106 to 159 (EEEE…MEGE) and 178 to 200 (LAVQ…NNKL). 2 stretches are compositionally biased toward basic and acidic residues: residues 111–140 (EKEK…KVEH) and 146–158 (KETP…KMEG).

All organs except the roots. Transported out of wounds to distal tissues.

It is found in the cytoplasm. Functionally, activates a lipid-based signal transduction pathway in which linolenic acid is converted to jasmonic acid, a potent activator of defense gene transcription, including proteinase inhibitor. In Solanum lycopersicum (Tomato), this protein is Systemin.